Reading from the N-terminus, the 146-residue chain is Leghemoglobin alpha (146 aa).

The Globin domain maps to 3–146; the sequence is AFTEKQEALV…LAAAIKKAYA (144 aa). A nitrated tyrosine mark is found at Tyr26 and Tyr31. Residue Ser46 participates in heme b binding. The residue at position 46 (Ser46) is a Phosphoserine. His62 serves as a coordination point for O2. Heme b-binding residues include His93 and Lys96. Residue Tyr134 is modified to Nitrated tyrosine.

This sequence belongs to the plant globin family. In terms of assembly, monomer. Nitrated mainly at Tyr-31 and, to a lower extent, at Tyr-26 and Tyr-134, in effective nodules and particularly in hypoxic conditions; this mechanism may play a protective role in the symbiosis by buffering toxic peroxynitrite NO(2)(-). Nitration level decrease during nodule senescence. Post-translationally, phosphorylation at Ser-46 disrupts the molecular environment of its porphyrin ring oxygen binding pocket, thus leading to a reduced oxygen consumption and to the delivery of oxygen O(2) to symbiosomes. Root nodules.

The protein localises to the cytoplasm. Its subcellular location is the cytosol. It is found in the nucleus. In terms of biological role, leghemoglobin that reversibly binds oxygen O(2) through a pentacoordinated heme iron. In root nodules, facilitates the diffusion of oxygen to the bacteroids while preventing the bacterial nitrogenase from being inactivated by buffering dioxygen, nitric oxide and carbon monoxide, and promoting the formation of reactive oxygen species (ROS, e.g. H(2)O(2)). This role is essential for symbiotic nitrogen fixation (SNF). This is Leghemoglobin alpha from Phaseolus vulgaris (Kidney bean).